The following is a 78-amino-acid chain: UPF0291 protein ABC2165 (78 aa).

The disordered stretch occupies residues 56–78 (AKGNDVTPQKLKDSKAQKHKRLH).

The protein belongs to the UPF0291 family.

It localises to the cytoplasm. The chain is UPF0291 protein ABC2165 from Shouchella clausii (strain KSM-K16) (Alkalihalobacillus clausii).